We begin with the raw amino-acid sequence, 317 residues long: Probable deoxyhypusine synthase (317 aa).

Catalysis depends on Lys285, which acts as the Nucleophile.

Belongs to the deoxyhypusine synthase family. It depends on NAD(+) as a cofactor.

The catalysed reaction is [eIF5A protein]-L-lysine + spermidine = [eIF5A protein]-deoxyhypusine + propane-1,3-diamine. It functions in the pathway protein modification; eIF5A hypusination. Its function is as follows. Catalyzes the NAD-dependent oxidative cleavage of spermidine and the subsequent transfer of the butylamine moiety of spermidine to the epsilon-amino group of a specific lysine residue of the eIF-5A precursor protein to form the intermediate deoxyhypusine residue. This chain is Probable deoxyhypusine synthase (dys), found in Methanosarcina thermophila.